The following is a 249-amino-acid chain: Pyridoxine 5'-phosphate synthase (249 aa).

3-amino-2-oxopropyl phosphate is bound at residue N7. 9-10 (DH) serves as a coordination point for 1-deoxy-D-xylulose 5-phosphate. Position 18 (R18) interacts with 3-amino-2-oxopropyl phosphate. Catalysis depends on H43, which acts as the Proton acceptor. 1-deoxy-D-xylulose 5-phosphate-binding residues include R45 and H50. E70 serves as the catalytic Proton acceptor. 1-deoxy-D-xylulose 5-phosphate is bound at residue T100. The Proton donor role is filled by H190. 3-amino-2-oxopropyl phosphate-binding positions include G191 and 212–213 (GH).

This sequence belongs to the PNP synthase family. Homooctamer; tetramer of dimers.

The protein localises to the cytoplasm. The catalysed reaction is 3-amino-2-oxopropyl phosphate + 1-deoxy-D-xylulose 5-phosphate = pyridoxine 5'-phosphate + phosphate + 2 H2O + H(+). The protein operates within cofactor biosynthesis; pyridoxine 5'-phosphate biosynthesis; pyridoxine 5'-phosphate from D-erythrose 4-phosphate: step 5/5. Functionally, catalyzes the complicated ring closure reaction between the two acyclic compounds 1-deoxy-D-xylulose-5-phosphate (DXP) and 3-amino-2-oxopropyl phosphate (1-amino-acetone-3-phosphate or AAP) to form pyridoxine 5'-phosphate (PNP) and inorganic phosphate. This chain is Pyridoxine 5'-phosphate synthase, found in Synechococcus sp. (strain CC9311).